The following is a 326-amino-acid chain: MIEKSQACHDSLLDSVGQTPMVQLHQLFPKHEVFAKLEYMNPGGSMKDRPAKYIIEHGIKHGLITENTHLIESTSGNLGIALAMIAKIKGLKLTCVVDPKISPTNLKIIKSYGVNVEMVEEPDAHGGYLMTRIAKVQELLATIEDAYWINQYANELNWQSHYHGAGTEIVETIKQPIDYFVAPVSTTGSIMGMSRKIKEVHPNVQIVAVDAKGSVIFGDKPINRELPGIGASRVPEILNRSEINQVIHVDDYQSALGCRKLIDYEGIFAGGSTGSIIVAIEQLITSIEEGATIVTILPDRGDRYLDLVYSDTWLEKMKSRQGVKSE.

At Lys-47 the chain carries N6-(pyridoxal phosphate)lysine. Pyridoxal 5'-phosphate contacts are provided by residues Asn-77, 185 to 189 (STTGS), and Ser-272.

It belongs to the cysteine synthase/cystathionine beta-synthase family. SbnA subfamily. Homodimer. Pyridoxal 5'-phosphate is required as a cofactor.

It catalyses the reaction O-phospho-L-serine + L-glutamate = N-[(2S)-2-amino-2-carboxyethyl]-L-glutamate + phosphate + H(+). Its pathway is siderophore biosynthesis. Its function is as follows. Catalyzes the synthesis of N-((2S)-2-amino-2-carboxyethyl)-L-glutamate (ACEGA) from O-phospho-L-serine and L-glutamate. Involved in the biosynthesis of L-2,3-diaminopropionic acid (L-Dap), a precursor of staphyloferrin B and antibiotics. This chain is N-(2-amino-2-carboxyethyl)-L-glutamate synthase (sbnA), found in Staphylococcus aureus (strain bovine RF122 / ET3-1).